The primary structure comprises 664 residues: MAGLIPQSFIDDLLNRTDIVEVVSSRIQLKKTGKNYSACCPFHKEKTPSFTVSPDKQFYYCFGCGAGGNALGFVMDHDQLEFPQAVEELAKRAGMDVPREERGGRGHTPRQPTDSPLYPLLSAAAEFYKQALKSHPARKAAVNYLKGRGLTGEIARDFGLGFAPPGWDNLLKHLGGDNLQLKAMLDAGLLVENSDTGKRYDRFRDRVMFPIRDSRGRIIAFGGRVLGDDKPKYLNSPETPVFHKGQELYGLYEARQKNRDLDEIMVVEGYMDVIALAQQGIRNAVATLGTATSEEHIKRLFRLVPSILFCFDGDQAGRKAAWRALESVLPNLQDGKRVRFLFLPEGEDPDSLVRAEGEDAFRARITQQAQPLAEYFFQQLMLEADPATLEGKAHLATLAAPLLEKIPGNNLRLLMRQRLSEITGLSGENIGQLAHHSPPPSSMDHGASGVLDGDDYFAASAYYENEPSHAPFDAAPGYVEAQPRKSWNKDKKPWDGKKWDGKKKWDKGGRGDFKAPQRTPVSVESTTLNALRTLLHHPQLALKVDDAGTLAREQDTYAQLLVSLLEALQKNPRQSSMQLIARWHGTPQGRLLQALGEKEWLIVQENLEKQFFDTITKLSESQRFGEREERLRSVMQKSYSELTDEEKALLREHYSVAASSPSQS.

The segment at 40-64 adopts a CHC2-type zinc-finger fold; that stretch reads CPFHKEKTPSFTVSPDKQFYYCFGC. Residues 94-104 show a composition bias toward basic and acidic residues; it reads GMDVPREERGG. The disordered stretch occupies residues 94–115; that stretch reads GMDVPREERGGRGHTPRQPTDS. Residues 262–344 form the Toprim domain; sequence DEIMVVEGYM…GKRVRFLFLP (83 aa). Mg(2+) contacts are provided by E268, D312, and D314. The tract at residues 483–521 is disordered; it reads PRKSWNKDKKPWDGKKWDGKKKWDKGGRGDFKAPQRTPV. A compositionally biased stretch (basic and acidic residues) spans 487 to 515; sequence WNKDKKPWDGKKWDGKKKWDKGGRGDFKA.

It belongs to the DnaG primase family. Monomer. Interacts with DnaB. The cofactor is Zn(2+). It depends on Mg(2+) as a cofactor.

It carries out the reaction ssDNA + n NTP = ssDNA/pppN(pN)n-1 hybrid + (n-1) diphosphate.. Functionally, RNA polymerase that catalyzes the synthesis of short RNA molecules used as primers for DNA polymerase during DNA replication. In Pseudomonas aeruginosa (strain ATCC 15692 / DSM 22644 / CIP 104116 / JCM 14847 / LMG 12228 / 1C / PRS 101 / PAO1), this protein is DNA primase.